A 2273-amino-acid chain; its full sequence is Linear gramicidin synthase subunit A (2273 aa).

A GART region spans residues 1-144; that stretch reads MRILFLTTFM…AIEELFIREW (144 aa). 2 consecutive Carrier domains span residues 693 to 767 and 1724 to 1798; these read APTD…TEQK and APRT…TSEQ. S728 and S1759 each carry O-(pantetheine 4'-phosphoryl)serine.

The protein belongs to the ATP-dependent AMP-binding enzyme family. Large multienzyme complex composed of 4 subunits; LgrA, LgrB, LgrC and LgrD. Requires pantetheine 4'-phosphate as cofactor.

Activates valine (or leucine, but much less frequently), and then glycine and catalyzes the formation of the peptide bond in the first step of peptide synthesis. This enzyme may also play a role in N-formylation of the first amino acid residue in the synthesized dipeptide. This is Linear gramicidin synthase subunit A (lgrA) from Brevibacillus parabrevis.